The sequence spans 87 residues: Cell division protein FtsL (87 aa).

Over 1–3 (MSR) the chain is Cytoplasmic. A helical membrane pass occupies residues 4 to 23 (LLLIVLLACSIASAIGVVYM). Over 24 to 87 (RHMHRKLFVQ…ETSDIVVIRP (64 aa)) the chain is Periplasmic.

Belongs to the FtsL family. In terms of assembly, part of a complex composed of FtsB, FtsL and FtsQ.

It is found in the cell inner membrane. Essential cell division protein. May link together the upstream cell division proteins, which are predominantly cytoplasmic, with the downstream cell division proteins, which are predominantly periplasmic. The protein is Cell division protein FtsL of Xanthomonas campestris pv. campestris (strain ATCC 33913 / DSM 3586 / NCPPB 528 / LMG 568 / P 25).